Consider the following 382-residue polypeptide: Histidinol-phosphate aminotransferase (382 aa).

Lys-215 carries the N6-(pyridoxal phosphate)lysine modification. Positions 360 to 382 are disordered; it reads NSNNIDNQSKTHSQTSSIRKGTI.

This sequence belongs to the class-II pyridoxal-phosphate-dependent aminotransferase family. Histidinol-phosphate aminotransferase subfamily. In terms of assembly, homodimer. The cofactor is pyridoxal 5'-phosphate.

The catalysed reaction is L-histidinol phosphate + 2-oxoglutarate = 3-(imidazol-4-yl)-2-oxopropyl phosphate + L-glutamate. It participates in amino-acid biosynthesis; L-histidine biosynthesis; L-histidine from 5-phospho-alpha-D-ribose 1-diphosphate: step 7/9. This Yersinia pseudotuberculosis serotype IB (strain PB1/+) protein is Histidinol-phosphate aminotransferase.